The chain runs to 355 residues: MINVLVVEDSPVVREFLIYILNSDPDITVIATAGDGEEAIDALRNHRPDVITMDIHMPKLNGVEATQLIMETQPTPIVIVSGSTDPAEVGTTFDAIDAGALAVLPRPAGIGHPDHEATARKMIEVVKLMSEVKVVRRWARMRGASPASHSVRAPLLNRVAPARIVVVGASTGGPPALEAILSSLPKHFPVPILIVQHMTTGFMEGFVQWLKNSSNLPVHIARQGELPLPGHVYMAPDEYQMKVENRGEIVLTKDEPEHGSRPSISYLFRAVARVYGHDAVAGLLTGMGRDGADELRLLKEKGAITFAQDKESSVVHGMAGEAIRLGAATMVLPLEKIAAALTNLVAERGETKLGA.

The Response regulatory domain occupies 3–121 (NVLVVEDSPV…HPDHEATARK (119 aa)). Residue aspartate 54 is modified to 4-aspartylphosphate. One can recognise a CheB-type methylesterase domain in the interval 154–348 (PLLNRVAPAR…AALTNLVAER (195 aa)). Catalysis depends on residues serine 170, histidine 197, and aspartate 290.

It belongs to the CheB family. In terms of processing, phosphorylated by CheA. Phosphorylation of the N-terminal regulatory domain activates the methylesterase activity.

It localises to the cytoplasm. The catalysed reaction is [protein]-L-glutamate 5-O-methyl ester + H2O = L-glutamyl-[protein] + methanol + H(+). It catalyses the reaction L-glutaminyl-[protein] + H2O = L-glutamyl-[protein] + NH4(+). Its function is as follows. Involved in chemotaxis. Part of a chemotaxis signal transduction system that modulates chemotaxis in response to various stimuli. Catalyzes the demethylation of specific methylglutamate residues introduced into the chemoreceptors (methyl-accepting chemotaxis proteins or MCP) by CheR. Also mediates the irreversible deamidation of specific glutamine residues to glutamic acid. The polypeptide is Protein-glutamate methylesterase/protein-glutamine glutaminase (Nitrosospira multiformis (strain ATCC 25196 / NCIMB 11849 / C 71)).